A 640-amino-acid chain; its full sequence is Sodium-dependent nutrient amino acid transporter 1 (640 aa).

Over residues 1–13 the composition is skewed to low complexity; it reads MELKPNGNHNNNN. The tract at residues 1–25 is disordered; the sequence is MELKPNGNHNNNNAAEKSEDTEKAK. Topologically, residues 1 to 30 are cytoplasmic; sequence MELKPNGNHNNNNAAEKSEDTEKAKAERTN. Over residues 16-25 the composition is skewed to basic and acidic residues; the sequence is EKSEDTEKAK. Transmembrane regions (helical) follow at residues 31 to 51, 64 to 84, and 117 to 137; these read WGNGLEFLMSCISVSVGLGNV, GAFLIPYIIVLFLIGKPMYYL, and TICIISYYSSLLALTLYYLFV. N174, N181, and N197 each carry an N-linked (GlcNAc...) asparagine glycan. Transmembrane regions (helical) follow at residues 228-248, 257-277, 306-326, 340-360, 400-420, 447-467, 473-493, 515-535, and 551-571; these read PDWKLTLALLASWVVIFLVIM, AAYFLALFPYVVLFVLLIRAV, AVVQCFFSLAVGSGPIIMFAS, IVTTLDTLTSLLGGITIFAIL, LFSVLFFFMLFVLGIGSIVAL, CGFLMGLVYVTPGGQWILTLV, TYVVFILAIFELAGIVWIYGL, CWSFFTPVMMIIIFIYSMVTI, and VAGWLLFGIGAAQFPLWGLWY.

The protein belongs to the sodium:neurotransmitter symporter (SNF) (TC 2.A.22) family.

Its subcellular location is the membrane. Unusual broad substrate spectrum amino acid:sodium cotransporter that promotes absorption of the D isomers of essential amino acids. Neutral amino acids are the preferred substrates, especially methionine and phenylalanine. In Drosophila ananassae (Fruit fly), this protein is Sodium-dependent nutrient amino acid transporter 1.